We begin with the raw amino-acid sequence, 691 residues long: MNNNFSSMIDRYKHQQLQIGSVSPQQISAWATKILPNGEIVGEVKKPYTFLYKTNKPEKEGLFCERIFGPIKSGICACGNYRVIGDEKEEQKFCEQCGVEFVDSRIRRYRMGCIKLACPVTHVWYLKRLPSYIANILDKPLKELEGLVYCDFSFARPITNKPTFLRLRGLLKYEIQSWKSSIPLFFTTQGFDTFRNREISTGAGAIREQLADLDLRILLENSLLEWKDLGEEENTGNEWEDRKAGRRKGFLVRRMELVKHFIRTNIEPKWMVLCLLPVLPPELRPIIQIDGGKLMSSDINELYRRVIYRNNTLTDLLTTSRSTPGELVMCQEKLVQEAVDTLLDNGIRGQPMRDGHNKVYKSFSDIIEGKEGRFRETLLGKRVDYSGRSVIVVGPSLSLHQCGLPREIAIELFQPFVIRDLIKQHLASNIGVAKSKIREKEPIIWEILQDVMQGHPVLLNRAPTLHRLGIQAFQPVLVEGRVICLHPLVCKGFNADFDGDQMAVHVPLSLEAQAEARLLMFSHMNLLSPAIGDPISVPTQDMLIGLYVLTSEKHRGICTNRYTNCNIRTLQTKSSDYSNSKYKNPYNNGPFFCNSYDAIGAYRQKRINLESPLWLRWRLDRRVITSRETPIEVHYESRGTYFEIYGHFLIVRSLKKKILFIYLRTTVGHISLYREIEEAIQGFSRAWSSDT.

The Zn(2+) site is built by cysteine 76, cysteine 78, cysteine 94, and cysteine 97. Residues aspartate 496, aspartate 498, and aspartate 500 each coordinate Mg(2+).

This sequence belongs to the RNA polymerase beta' chain family. RpoC1 subfamily. It depends on Mg(2+) as a cofactor. Requires Zn(2+) as cofactor.

The protein resides in the plastid. The enzyme catalyses RNA(n) + a ribonucleoside 5'-triphosphate = RNA(n+1) + diphosphate. Functionally, DNA-dependent RNA polymerase catalyzes the transcription of DNA into RNA using the four ribonucleoside triphosphates as substrates. This is DNA-directed RNA polymerase subunit beta' from Cuscuta exaltata (Tall dodder).